The sequence spans 527 residues: Baicalin-beta-D-glucuronidase (527 aa).

The signal sequence occupies residues 1 to 25 (MGFQVWQKGLCVLCFSLIFICGVIG). The active-site Proton donor is Glu-212. Glu-329 acts as the Nucleophile in catalysis.

Belongs to the glycosyl hydrolase 79 family. Homotetramer.

The enzyme catalyses baicalin + H2O = baicalein + D-glucuronate + H(+). In terms of biological role, beta-glucuronidase involved in the initiation of H(2)O(2) metabolism via the production of baicalein. Unable to use glycyrrhizin, gypsogenin-3-O-D-glucuronide, luteolin-7-O-D-glucoside and apigenin-7-O-D-glucoside as substrates. This chain is Baicalin-beta-D-glucuronidase (SGUS), found in Scutellaria baicalensis (Baical skullcap).